Consider the following 309-residue polypeptide: Short-chain dehydrogenase/reductase ARMGADRAFT_1018437 (309 aa).

Lys-64, Asp-86, and Asn-113 together coordinate NADP(+). The active-site Proton donor is the Ser-167. 2 residues coordinate NADP(+): Tyr-196 and Lys-200. Residue Tyr-196 is the Proton acceptor of the active site. The Lowers pKa of active site Tyr role is filled by Lys-200.

It belongs to the short-chain dehydrogenases/reductases (SDR) family.

The protein operates within secondary metabolite biosynthesis. In terms of biological role, short-chain dehydrogenase/reductase, part of the gene cluster that mediates the biosynthesis of melleolides, a range of antifungal and phytotoxic polyketide derivatives composed of an orsellinic acid (OA) moiety esterified to various sesquiterpene alcohols. The first step in melleolides biosynthesis is performed by the delta(6)-protoilludene synthase PRO1 which catalyzes the cyclization of farnesyl diphosphate to protoilludene. The orsellinic acid synthase armB produces OA by condensing acetyl-CoA with 3 malonyl-CoA units in a three-round chain elongation reaction folowed by a C2-C7 ring closure. ArmB further catalyzes the trans-esterification of OA to the various sesquiterpene alcohols resulting from the hydroxylation of protoilludene. The melleolides cluster also includes 5 cytochrome P450 monooxygenases, 4 NAD(+)-dependent oxidoreductases, one flavin-dependent oxidoreductase, and one O-methyltransferase. The cytochrome P450 monooxygenases may be involved in protoilludene hydroxylation to elaborate melleolides with multiple alcohol groups, such as melleolide D, which carries alcohol functionalities at C-4, C-5, C-10, and C-13. The role of the NAD(+)-dependent enzymes remains unknown. Numerous melleolides, including arnamial, show 5'-O-methylation of the aromatic moiety which may be catalyzed by the methyltransferase encoded in the cluster. The flavin-dependent oxidoreductase might represent the dehydrogenase yielding the aldehyde in position 1 of arnamial and other melleolides. Finally, several halogenase localized outside of the cluster, are able to catalyze the transfer of a single chlorine atom to the melleolide backbone, resulting in a 6'-chloromelleolide product. This chain is Short-chain dehydrogenase/reductase ARMGADRAFT_1018437, found in Armillaria gallica (Bulbous honey fungus).